Here is a 615-residue protein sequence, read N- to C-terminus: Delta(14)-sterol reductase LBR (615 aa).

The Tudor domain maps to 1-62 (MPSRKFADGE…DIKPLTSFRQ (62 aa)). Topologically, residues 1–211 (MPSRKFADGE…IRAKDLEFGG (211 aa)) are nuclear. Residues 52-109 (NDIKPLTSFRQRKGGSTSSSPSRRRGSRSRSRSRSPGRPPKSARRSASASHQADIKEA) are disordered. Position 55 is an N6-acetyllysine (Lys55). Thr58 carries the phosphothreonine modification. A phosphoserine mark is found at Ser59 and Ser67. Residues Ser71 and Ser86 each carry the phosphoserine; by CDK1 modification. The span at 73 to 86 (SRRRGSRSRSRSRS) shows a compositional bias: basic residues. 2 positions are modified to phosphoserine: Ser97 and Ser99. Thr118 is modified (phosphothreonine). Ser128 bears the Phosphoserine mark. Phosphothreonine is present on Thr200. Transmembrane regions (helical) follow at residues 212–232 (VPGVFLIMFGLPVFLFLLLLM), 258–278 (VFGVYLLWFLIQVLFYLLPIG), 299–319 (FYAFILTSAVIGTSLFQGVEF), 326–346 (FLQFALAATVFCVVLSVYLYM), 386–406 (FCELRPGLIGWVVINLVMLLA), 447–467 (IIHDGFGFMLAFGDLVWVPFI), 481–501 (EVSWPMASLIIVLKLCGYVIF), and 561–581 (PCGFNHILPYFYIIYFTMLLV). 2 positions are modified to N6-acetyllysine: Lys594 and Lys601.

It belongs to the ERG4/ERG24 family. As to quaternary structure, interacts with CBX5. Interacts with DNA. Interaction with DNA is sequence independent with higher affinity for supercoiled and relaxed circular DNA than linear DNA. Interacts with lamin B. Interacts with CLNK. Interacts with TMEM147; promoting LBR localization to the nucleus inner membrane. Phosphorylated by CDK1 in mitosis when the inner nuclear membrane breaks down into vesicles that dissociate from the lamina and the chromatin. It is phosphorylated by different protein kinases in interphase when the membrane is associated with these structures. Phosphorylation of LBR and HP1 proteins may be responsible for some of the alterations in chromatin organization and nuclear structure which occur at various times during the cell cycle. Phosphorylated by SRPK1. In late anaphase LBR is dephosphorylated, probably by PP1 and/or PP2A, allowing reassociation with chromatin. As to expression, expressed in the bone marrow, liver, heart, adrenal gland, lung, placenta and uterus. Expressed in osteoclasts and osteoblast-like cells.

It is found in the nucleus inner membrane. The protein localises to the endoplasmic reticulum membrane. It localises to the cytoplasm. The protein resides in the nucleus. The catalysed reaction is 5alpha-cholest-8,14-dien-3beta-ol + NADPH + H(+) = 5alpha-cholest-8-en-3beta-ol + NADP(+). It carries out the reaction 4,4-dimethyl-5alpha-cholesta-8,24-dien-3beta-ol + NADP(+) = 4,4-dimethyl-5alpha-cholesta-8,14,24-trien-3beta-ol + NADPH + H(+). It catalyses the reaction 4,4-dimethyl-8,14-cholestadien-3beta-ol + NADPH + H(+) = 4,4-dimethyl-5alpha-cholest-8-en-3beta-ol + NADP(+). It participates in steroid biosynthesis; cholesterol biosynthesis. Catalyzes the reduction of the C14-unsaturated bond of lanosterol, as part of the metabolic pathway leading to cholesterol biosynthesis. Plays a critical role in myeloid cell cholesterol biosynthesis which is essential to both myeloid cell growth and functional maturation. Mediates the activation of NADPH oxidases, perhaps by maintaining critical levels of cholesterol required for membrane lipid raft formation during neutrophil differentiation. Anchors the lamina and the heterochromatin to the inner nuclear membrane. This Homo sapiens (Human) protein is Delta(14)-sterol reductase LBR (LBR).